The sequence spans 328 residues: Ferredoxin--NADP reductase 1 (328 aa).

Residues Glu37, Lys45, Tyr49, Val89, and Thr310 each coordinate FAD.

It belongs to the ferredoxin--NADP reductase type 2 family. Homodimer. It depends on FAD as a cofactor.

It catalyses the reaction 2 reduced [2Fe-2S]-[ferredoxin] + NADP(+) + H(+) = 2 oxidized [2Fe-2S]-[ferredoxin] + NADPH. This is Ferredoxin--NADP reductase 1 from Latilactobacillus sakei subsp. sakei (strain 23K) (Lactobacillus sakei subsp. sakei).